Consider the following 170-residue polypeptide: Ubiquitin-conjugating enzyme E2 G1 (170 aa).

M1 carries the post-translational modification N-acetylmethionine. T2 carries the post-translational modification N-acetylthreonine; in Ubiquitin-conjugating enzyme E2 G1, N-terminally processed. The 162-residue stretch at 5–166 (QSALLLRRQL…VARCVRKSQE (162 aa)) folds into the UBC core domain. C90 functions as the Glycyl thioester intermediate in the catalytic mechanism.

The protein belongs to the ubiquitin-conjugating enzyme family. In terms of processing, autoubiquitinated.

The catalysed reaction is S-ubiquitinyl-[E1 ubiquitin-activating enzyme]-L-cysteine + [E2 ubiquitin-conjugating enzyme]-L-cysteine = [E1 ubiquitin-activating enzyme]-L-cysteine + S-ubiquitinyl-[E2 ubiquitin-conjugating enzyme]-L-cysteine.. The protein operates within protein modification; protein ubiquitination. Accepts ubiquitin from the E1 complex and catalyzes its covalent attachment to other proteins. In vitro catalyzes 'Lys-48'-, as well as 'Lys-63'-linked polyubiquitination. May be involved in degradation of muscle-specific proteins. Mediates polyubiquitination of CYP3A4. The protein is Ubiquitin-conjugating enzyme E2 G1 (UBE2G1) of Macaca fascicularis (Crab-eating macaque).